We begin with the raw amino-acid sequence, 125 residues long: MARVKRGTTTHAKHKRILGAAKGYYGRRKNTIRIARQAVEKAGQYAYRDRKVKKRSFRALWIQRINAAVRAEGLTYGVFMHGLKLAGIELDRKVLADIAMHEGEAFSGIIAQAKAALPEGARIAA.

This sequence belongs to the bacterial ribosomal protein bL20 family.

Binds directly to 23S ribosomal RNA and is necessary for the in vitro assembly process of the 50S ribosomal subunit. It is not involved in the protein synthesizing functions of that subunit. The polypeptide is Large ribosomal subunit protein bL20 (Rhizorhabdus wittichii (strain DSM 6014 / CCUG 31198 / JCM 15750 / NBRC 105917 / EY 4224 / RW1) (Sphingomonas wittichii)).